Here is a 507-residue protein sequence, read N- to C-terminus: MFLLEYTYWKIAAHLVNSGYGVIQAGESDEIWLEAPDKSSHDLVRLYKHDLDFRQEMVRDIEEQAERVERVRHQLGRRRMKLLNVFFSTEAPVDDWEEIAKKTFEKGTVSVEPAIVRGTMLRDDLQAVFPSFRTEDCSEEHASFENAQMARERFLSLVLKQEEQRKTEAAVFQNGKPTFTYLFIALQILMFFLLEINGGSTNTETLVAFGAKENSLIAQGEWWRLLTPIVLHIGIAHLAFNTLALWSVGTAVERMYGSGRFLLIYLAAGITGSIASFVFSPYPSAGASGAIFGCLGALLYVALSNRKMFLRTIGTNIIVIIIINLGFGFAVSNIDNSGHIGGLIGGFFAAAALGLPKAGAFGKRLLSAVLLIALAVGFLYYGLHSPSHQESALIQQASELYQEGKYEEVTELLNGEAAQKDASADLLKILAVSDIQIGEYDQAVSLLERAVKKEPKDHASYYNLALLYAEKNELAQAEKAIQTAVKLKPKEQRYKELQRQIENNKES.

A run of 5 helical transmembrane segments spans residues phenylalanine 179–glycine 199, isoleucine 229–glycine 249, phenylalanine 261–proline 281, proline 283–leucine 303, and threonine 312–serine 332. The active-site Nucleophile is serine 288. The active-site Charge relay system is the histidine 339. Helical transmembrane passes span isoleucine 340 to alanine 360 and leucine 365 to serine 385. 2 TPR repeats span residues alanine 424 to aspartate 457 and histidine 458 to glutamate 491.

The protein belongs to the peptidase S54 family.

The protein resides in the cell membrane. It catalyses the reaction Cleaves type-1 transmembrane domains using a catalytic dyad composed of serine and histidine that are contributed by different transmembrane domains.. With respect to regulation, inhibited by dichloroisocoumarin (DCI) and N-p-tosyl-L-phenylalanine chloromethyl ketone (TPCK), but not by other serine protease inhibitors such as sulfonyl fluoride PMSF and 4-(2-aminoethyl)benzenesulfonyl fluoride (AEBSF). Its function is as follows. Rhomboid-type serine protease that catalyzes intramembrane proteolysis. Important for normal cell division and sporulation. May act as a glucose exporter. The protein is Rhomboid protease GluP (gluP) of Bacillus subtilis (strain 168).